We begin with the raw amino-acid sequence, 150 residues long: Transcription antitermination protein NusB (150 aa).

Belongs to the NusB family.

Involved in transcription antitermination. Required for transcription of ribosomal RNA (rRNA) genes. Binds specifically to the boxA antiterminator sequence of the ribosomal RNA (rrn) operons. The chain is Transcription antitermination protein NusB from Streptococcus pyogenes serotype M3 (strain ATCC BAA-595 / MGAS315).